The chain runs to 297 residues: MAKALQGVMAALLTPFDHQQQLDSESLRRLVRFNIGQGIDGLYVGGSTGEAFVQSLAEREQVLEIVAEEAKGKITLIAHVGTVSTAESQQLASAAKRYGFDAVSAVTPFYYPFSFEEHCDHYRAIIDSADGLPMVVYNIPALSGVKLTLDQINTLVTLPGVSALKQTSGDLFQMEQIRRAHPDLVLYNGYDEIFASGLLAGADGGIGSTYNIMGWRYQGIVQALREGDVAKAQRLQTECNKVIDLLIKTGVFRGLKTVLHYMDVVSVPLCRKPLAPVDEKYLPALKALAQQLMEEKA.

The aceneuramate site is built by serine 47 and threonine 48. The active-site Proton donor is tyrosine 137. The active-site Schiff-base intermediate with substrate is the lysine 165. Aceneuramate-binding residues include threonine 167, glycine 189, aspartate 191, glutamate 192, and serine 208.

It belongs to the DapA family. NanA subfamily. In terms of assembly, homotetramer.

Its subcellular location is the cytoplasm. It catalyses the reaction aceneuramate = aldehydo-N-acetyl-D-mannosamine + pyruvate. The protein operates within amino-sugar metabolism; N-acetylneuraminate degradation; D-fructose 6-phosphate from N-acetylneuraminate: step 1/5. Catalyzes the reversible aldol cleavage of N-acetylneuraminic acid (sialic acid; Neu5Ac) to form pyruvate and N-acetylmannosamine (ManNAc) via a Schiff base intermediate. The sequence is that of N-acetylneuraminate lyase from Salmonella agona (strain SL483).